Here is a 330-residue protein sequence, read N- to C-terminus: MGPLWLDVAGYELSAEDREILQHPTVGGVILFGRNYHDNQQLLALNKAIRQAAKRPILIGVDQEGGRVQRFREGFSRIPPAQYYARAENGVELAEQGGWLMAAELIAHDVDLSFAPVLDMGFACKAIGNRAFGEDVQTVLKHSSAFLRGMKAVGMATTGKHFPGHGAVIADSHLETPYDERETIAQDMAIFRAQIEAGVLDAMMPAHVVYPHYDAQPASGSSYWLKQVLREELGFKGIVFSDDLSMEGAAVMGGPVERSHQALVAGCDMILMCNKREAAVEVLDNLPIMVVPQATALLKKQQFSYSELKRLDRWQQASANMQRLIEQFSV.

Substrate is bound by residues Asp-62, Arg-70, Arg-130, and 160 to 161 (KH). Residue His-173 is the Proton donor/acceptor of the active site. Catalysis depends on Asp-242, which acts as the Nucleophile.

The protein belongs to the glycosyl hydrolase 3 family. NagZ subfamily.

It localises to the cytoplasm. It catalyses the reaction Hydrolysis of terminal non-reducing N-acetyl-D-hexosamine residues in N-acetyl-beta-D-hexosaminides.. Its pathway is cell wall biogenesis; peptidoglycan recycling. Its function is as follows. Plays a role in peptidoglycan recycling by cleaving the terminal beta-1,4-linked N-acetylglucosamine (GlcNAc) from peptide-linked peptidoglycan fragments, giving rise to free GlcNAc, anhydro-N-acetylmuramic acid and anhydro-N-acetylmuramic acid-linked peptides. This Vibrio cholerae serotype O1 (strain ATCC 39541 / Classical Ogawa 395 / O395) protein is Beta-hexosaminidase.